The sequence spans 419 residues: Transcription factor IIIB 50 kDa subunit (419 aa).

The segment at 2 to 36 adopts a TFIIB-type zinc-finger fold; it reads PGRGRCPDCGSTELVEDSHYSQSQLVCSDCGCVVT. 4 residues coordinate Zn(2+): Cys7, Cys10, Cys28, and Cys31. 2 repeat units span residues 72–157 and 173–249. The interval 108-114 is interaction with target DNA; sequence AARLQKK. Basic and acidic residues predominate over residues 314–326; it reads DGTAEVETREKEP. The disordered stretch occupies residues 314–351; sequence DGTAEVETREKEPPGWGQGQGEGEVGNNSLGLPQGKRP. Residue Ser353 is modified to Phosphoserine. A required for the formation of a ternary complex with DNA and TBP; not required for interaction with TBP in the absence of DNA region spans residues 357 to 363; it reads LLPPCML. Cys361 bears the Cysteine sulfenic acid (-SOH) mark. Positions 365–419 are required for interaction with TBP and formation of a ternary complex with DNA and TBP; the sequence is SPKRICPVPPVSTVTGDENISDSEIEQYLRTPQEVRDFQRAQAARQAATSVPNPP.

It belongs to the TFIIB family. In terms of assembly, component of TFIIIB complexes. The TFIIIB complex has two activities, alpha and beta. The TFIIIB-alpha activity complex is composed of TBP, BDP1, and a complex containing both BRF2 and at least four stably associated proteins; this complex inhibits the transcription by pol III via its phosphorylation by CK2; YY1 facilitates the TFIIIB-alpha complex formation. Interacts with TBP; this interaction promotes recruitment of BRF2 to TATA box-containing promoters. Interacts with TBP and the BURE sequence (GC-rich sequence downstream from the TATA box) to form a strong ternary complex which is joined by BDP1; this ternary complex stimulates pol III transcription. Forms a trimeric complex composed of TBP, BRF2 and mini-SNAPc complex (SNAP43, SNAP50, and the N-terminal third of SNAP190) on the promoter. Assembly of the TBP-BRF2 complex is stimulated by SNAP190. Interacts with MAF1 and SNAPC4. In terms of processing, in response to oxidative stress, Cys-361 is reversibly oxidized to cysteine sulfenic acid. Oxidation of Cys-361 impairs formation of a ternary complex with TBP and DNA and down-regulates expression of target genes in response to oxidative stress.

The protein resides in the nucleus. Functionally, general activator of RNA polymerase III transcription. Factor exclusively required for RNA polymerase III transcription of genes with promoter elements upstream of the initiation sites. Contributes to the regulation of gene expression; functions as activator in the absence of oxidative stress. Down-regulates expression of target genes in response to oxidative stress. Overexpression protects cells against apoptosis in response to oxidative stress. This chain is Transcription factor IIIB 50 kDa subunit (BRF2), found in Homo sapiens (Human).